The chain runs to 118 residues: MISKPDKNKLRLKRHRRIRGKISGTAERPRLSIFRSNKNIYAQLIDDVAGVTLASASTLDENVSDATKLEQAAAVGKAIAEAAKAKNISTVVFDRSGYLYHGRIQALADAARENGLDF.

Belongs to the universal ribosomal protein uL18 family. In terms of assembly, part of the 50S ribosomal subunit; part of the 5S rRNA/L5/L18/L25 subcomplex. Contacts the 5S and 23S rRNAs.

Functionally, this is one of the proteins that bind and probably mediate the attachment of the 5S RNA into the large ribosomal subunit, where it forms part of the central protuberance. The chain is Large ribosomal subunit protein uL18 from Lactobacillus acidophilus (strain ATCC 700396 / NCK56 / N2 / NCFM).